The primary structure comprises 73 residues: Nodulin-1 (73 aa).

An N-terminal signal peptide occupies residues 1-23 (MERKTLASLCFFLIVLLAAQVVA). 3 disulfide bridges follow: cysteine 39–cysteine 64, cysteine 49–cysteine 71, and cysteine 53–cysteine 73.

In terms of tissue distribution, expressed in nodules, but not in leaves, stems, flowers and roots. In developing nodules, expressed close to the infection threads.

It localises to the secreted. Its function is as follows. Nodulation-related protein probably involved in the infection process. The polypeptide is Nodulin-1 (N1) (Medicago truncatula (Barrel medic)).